The sequence spans 462 residues: Metal cation symporter ZIP8 (462 aa).

A signal peptide spans 1–19 (MAPGRAVAGLLLLAATGLG). At 20-132 (RPSEGPELAF…PSFSEVWGYG (113 aa)) the chain is on the extracellular side. Residues N40, N88, and N96 are each glycosylated (N-linked (GlcNAc...) asparagine). The helical transmembrane segment at 133–153 (FLSVTIINLASLLGLILTPLI) threads the bilayer. Over 154 to 160 (KKSYFPK) the chain is Cytoplasmic. A helical membrane pass occupies residues 161-181 (ILTYFVGLAIGTLFSNAIFQL). The Extracellular segment spans residues 182–191 (IPEAFGFNPK). The chain crosses the membrane as a helical span at residues 192–212 (IDNYVEKAVAVFGGFYMLFFV). The Cytoplasmic segment spans residues 213–367 (ERTLKMLLKT…LNAGMSTRQA (155 aa)). Positions 345 to 350 (EEFPHE) match the XEXPHE-motif motif. The chain crosses the membrane as a helical span at residues 368–388 (LLFNFLSACSCYVGLAFGILV). The Extracellular portion of the chain corresponds to 389–390 (GN). A helical transmembrane segment spans residues 391 to 411 (NFAPNIIFALAGGMFLYISLA). At 412-431 (DMFPEMNDMLREKVTGRQTD) the chain is on the cytoplasmic side. The helical transmembrane segment at 432 to 452 (FTFFMIQNAGMLTGFTAILLI) threads the bilayer. Over 453 to 462 (TLYAGDIELQ) the chain is Extracellular.

It belongs to the ZIP transporter (TC 2.A.5) family. As to quaternary structure, homodimer. Post-translationally, N-glycosylated. N-glycosylation is not required for proper iron and zinc transport.

It is found in the cell membrane. Its subcellular location is the lysosome membrane. The protein resides in the apical cell membrane. It localises to the basolateral cell membrane. The catalysed reaction is Zn(2+)(out) + 2 hydrogencarbonate(out) = Zn(2+)(in) + 2 hydrogencarbonate(in). It catalyses the reaction selenite(out) + Zn(2+)(out) + hydrogencarbonate(out) = selenite(in) + Zn(2+)(in) + hydrogencarbonate(in). It carries out the reaction Mn(2+)(out) + 2 hydrogencarbonate(out) = Mn(2+)(in) + 2 hydrogencarbonate(in). The enzyme catalyses Fe(2+)(out) + 2 hydrogencarbonate(out) = Fe(2+)(in) + 2 hydrogencarbonate(in). The catalysed reaction is Cd(2+)(out) + 2 hydrogencarbonate(out) = Cd(2+)(in) + 2 hydrogencarbonate(in). It catalyses the reaction Co(2+)(out) + 2 hydrogencarbonate(out) = Co(2+)(in) + 2 hydrogencarbonate(in). Electroneutral divalent metal cation:bicarbonate symporter of the plasma membrane mediating the cellular uptake of zinc and manganese, two divalent metal cations important for development, tissue homeostasis and immunity. Transports an electroneutral complex composed of a divalent metal cation and two bicarbonate anions or alternatively a bicarbonate and a selenite anion. Thereby, it also contributes to the cellular uptake of selenium, an essential trace metal and micronutrient. Also imports cadmium a non-essential metal which is cytotoxic and carcinogenic. May also transport iron and cobalt through membranes. Through zinc import, indirectly regulates the metal-dependent transcription factor MTF1 and the expression of some metalloproteases involved in cartilage catabolism and also probably heart development. Also indirectly regulates the expression of proteins involved in cell morphology and cytoskeleton organization. Indirectly controls innate immune function and inflammatory response by regulating zinc cellular uptake which in turn modulates the expression of genes specific of these processes. Protects, for instance, cells from injury and death at the onset of inflammation. By regulating zinc influx into monocytes also directly modulates their adhesion to endothelial cells and arteries. Reclaims manganese from the bile at the apical membrane of hepatocytes, thereby regulating the activity of the manganese-dependent enzymes through the systemic levels of the nutrient. Also participates in manganese reabsorption in the proximal tubule of the kidney. By mediating the extracellular uptake of manganese by cells of the blood-brain barrier, may also play a role in the transport of the micronutrient to the brain. With manganese cellular uptake also participates in mitochondrial proper function. Finally, also probably functions intracellularly, translocating zinc from lysosome to cytosol to indirectly enhance the expression of specific genes during TCR-mediated T cell activation. This is Metal cation symporter ZIP8 from Rattus norvegicus (Rat).